The sequence spans 379 residues: Cytochrome b (379 aa).

The next 4 membrane-spanning stretches (helical) occupy residues 33–53 (FGSLLGMCLVIQILTGLFLAM), 77–98 (WLIRYLHANGASMFFICLFIHV), 113–133 (WNIGIILFLTTMATAFVGYVL), and 178–198 (FFAFHFILPFIIAAFALVHLL). The heme b site is built by H83 and H97. Positions 182 and 196 each coordinate heme b. H201 contacts a ubiquinone. A run of 4 helical transmembrane segments spans residues 226 to 246 (TKDLLGIFLLLLVLMILALFF), 288 to 308 (LGGVLALILSILILAAFPLLN), 320 to 340 (VTQVIYWXXIANLLVLTWIGG), and 347 to 367 (FTMIGQIASITYFAIXIILIP).

The protein belongs to the cytochrome b family. As to quaternary structure, the cytochrome bc1 complex contains 11 subunits: 3 respiratory subunits (MT-CYB, CYC1 and UQCRFS1), 2 core proteins (UQCRC1 and UQCRC2) and 6 low-molecular weight proteins (UQCRH/QCR6, UQCRB/QCR7, UQCRQ/QCR8, UQCR10/QCR9, UQCR11/QCR10 and a cleavage product of UQCRFS1). This cytochrome bc1 complex then forms a dimer. It depends on heme b as a cofactor.

The protein resides in the mitochondrion inner membrane. Component of the ubiquinol-cytochrome c reductase complex (complex III or cytochrome b-c1 complex) that is part of the mitochondrial respiratory chain. The b-c1 complex mediates electron transfer from ubiquinol to cytochrome c. Contributes to the generation of a proton gradient across the mitochondrial membrane that is then used for ATP synthesis. The chain is Cytochrome b (MT-CYB) from Akodon lutescens puer (Altiplano grass mouse).